The primary structure comprises 468 residues: Phosphatidylglycerol--prolipoprotein diacylglyceryl transferase (468 aa).

The next 3 membrane-spanning stretches (helical) occupy residues 21–41, 56–76, and 96–116; these read LPVR…LLIG, YDIA…YHLA, and IWDG…GAWI. Residue Arg-144 coordinates a 1,2-diacyl-sn-glycero-3-phospho-(1'-sn-glycerol). A run of 3 helical transmembrane segments spans residues 192 to 212, 218 to 238, and 256 to 276; these read VVQP…VALI, FIIG…AGRF, and INSF…ILAP. Residues 349-468 form a disordered region; that stretch reads VVQVADRDGE…RWWRLRRRRQ (120 aa). A compositionally biased stretch (low complexity) spans 391 to 406; sequence AEAASAAPEEPAALAS. Basic and acidic residues predominate over residues 445 to 455; sequence DGIRRQDDFSS. Residues 456-468 are compositionally biased toward basic residues; it reads RRRRWWRLRRRRQ.

Belongs to the Lgt family.

The protein localises to the cell membrane. It catalyses the reaction L-cysteinyl-[prolipoprotein] + a 1,2-diacyl-sn-glycero-3-phospho-(1'-sn-glycerol) = an S-1,2-diacyl-sn-glyceryl-L-cysteinyl-[prolipoprotein] + sn-glycerol 1-phosphate + H(+). The protein operates within protein modification; lipoprotein biosynthesis (diacylglyceryl transfer). Catalyzes the transfer of the diacylglyceryl group from phosphatidylglycerol to the sulfhydryl group of the N-terminal cysteine of a prolipoprotein, the first step in the formation of mature lipoproteins. This chain is Phosphatidylglycerol--prolipoprotein diacylglyceryl transferase, found in Mycobacterium bovis (strain ATCC BAA-935 / AF2122/97).